The chain runs to 325 residues: NADH-quinone oxidoreductase subunit H (325 aa).

9 consecutive transmembrane segments (helical) span residues 11–31 (ILLT…CGAF), 50–69 (SRVG…KMFF), 81–101 (LIFT…FAIV), 114–134 (IGIL…LFAG), 154–174 (LSYE…AGSF), 186–206 (LWNI…GVAV), 237–257 (FFVG…TLFF), 265–285 (LPPF…FILV), and 304–324 (ICLP…LYHA).

This sequence belongs to the complex I subunit 1 family. As to quaternary structure, NDH-1 is composed of 13 different subunits. Subunits NuoA, H, J, K, L, M, N constitute the membrane sector of the complex.

The protein localises to the cell inner membrane. It catalyses the reaction a quinone + NADH + 5 H(+)(in) = a quinol + NAD(+) + 4 H(+)(out). In terms of biological role, NDH-1 shuttles electrons from NADH, via FMN and iron-sulfur (Fe-S) centers, to quinones in the respiratory chain. The immediate electron acceptor for the enzyme in this species is believed to be ubiquinone. Couples the redox reaction to proton translocation (for every two electrons transferred, four hydrogen ions are translocated across the cytoplasmic membrane), and thus conserves the redox energy in a proton gradient. This subunit may bind ubiquinone. The polypeptide is NADH-quinone oxidoreductase subunit H (Edwardsiella ictaluri (strain 93-146)).